Consider the following 399-residue polypeptide: Elongation factor Tu (399 aa).

The 200-residue stretch at 10–209 (KPHVNIGTIG…EVDAYIPTPK (200 aa)) folds into the tr-type G domain. A G1 region spans residues 19–26 (GHVDHGKT). Residue 19–26 (GHVDHGKT) participates in GTP binding. T26 provides a ligand contact to Mg(2+). Residues 60–64 (GITIA) are G2. A G3 region spans residues 81-84 (DCPG). GTP is bound by residues 81 to 85 (DCPGH) and 136 to 139 (NKQD). Positions 136 to 139 (NKQD) are G4. The segment at 174-176 (SAL) is G5.

The protein belongs to the TRAFAC class translation factor GTPase superfamily. Classic translation factor GTPase family. EF-Tu/EF-1A subfamily. In terms of assembly, monomer.

The protein localises to the cytoplasm. It catalyses the reaction GTP + H2O = GDP + phosphate + H(+). In terms of biological role, GTP hydrolase that promotes the GTP-dependent binding of aminoacyl-tRNA to the A-site of ribosomes during protein biosynthesis. In Helicobacter pylori (strain P12), this protein is Elongation factor Tu.